The following is a 239-amino-acid chain: Major centromere autoantigen B (239 aa).

The segment at 28-185 is disordered; it reads AGFGGGPNAT…DDEVPVPSFG (158 aa). A phosphothreonine mark is found at threonine 37 and threonine 39. Composition is skewed to acidic residues over residues 46-117 and 148-179; these read GEEE…EAED and GEEDSESDSEEEEEDDDEDEDDEDDEEEDDEV. The tract at residues 176-239 is homodimerization; sequence DDEVPVPSFG…AGARGLGHQS (64 aa).

In terms of assembly, antiparallel homodimer. Interacts with CENPT. Identified in a centromere complex containing histones H2A, H2B and H4, and at least CENPA, CENPB, CENPC, CENPT, CENPN, HJURP, SUPT16H, SSRP1 and RSF1. In terms of processing, poly-ADP-ribosylated by PARP1. Post-translationally, N-terminally methylated by METTL11A/NTM1. Alpha-N-methylation is stimulated in response extracellular stimuli, including increased cell density and heat shock, and seems to facilitate binding to CENP-B boxes. Chromatin-bound CENP-B is primarily trimethylated.

It localises to the nucleus. The protein localises to the chromosome. The protein resides in the centromere. Interacts with centromeric heterochromatin in chromosomes and binds to a specific 17 bp subset of alphoid satellite DNA, called the CENP-B box. May organize arrays of centromere satellite DNA into a higher-order structure which then directs centromere formation and kinetochore assembly in mammalian chromosomes. The polypeptide is Major centromere autoantigen B (CENPB) (Ovis aries (Sheep)).